Reading from the N-terminus, the 382-residue chain is Phenylalanine dehydrogenase (382 aa).

An NAD(+)-binding site is contributed by Arg-54. An L-phenylalanine-binding site is contributed by Lys-78. Lys-90 functions as the Proton donor/acceptor in the catalytic mechanism. Residues Asp-125, Ser-156, Thr-160, 190-196 (GLGKVGY), 213-214 (DI), 253-254 (AF), and 274-276 (SAN) contribute to the NAD(+) site. Asn-276 provides a ligand contact to L-phenylalanine.

The protein belongs to the Glu/Leu/Phe/Val dehydrogenases family.

The catalysed reaction is L-phenylalanine + NAD(+) + H2O = 3-phenylpyruvate + NH4(+) + NADH + H(+). With respect to regulation, activity is not affected by the metal chelating agent EDTA. Addition of 1 mM Mg(2+) results in 15% increase in activity, while the enzyme is strongly inhibited by 1 mM Fe(3+), Fe(2+), Cu(2+), Zn(2+) and Ag(+). Catalyzes the reversible NAD(+)-dependent oxidative deamination of L-phenylalanine to phenylpyruvate. Can also catalyze the oxidative deamination of several other amino acids, with much lower efficiency. Shows activity towards various bulky aromatic alpha-keto acids/esters and (S)-amine alcohols. Can catalyze the amination of 3-(2-chlorophenyl)-2-oxopropionic acid (CPOA) to produce 2-chloro-L-phenylalanine (2-Cl-Phe), a chemical compound used in the pharmaceutical and biotechnology industries. Shows a preference for amination over deamination. The protein is Phenylalanine dehydrogenase of Bacillus thermotolerans (Quasibacillus thermotolerans).